The following is a 619-amino-acid chain: Dihydroxy-acid dehydratase (619 aa).

Asp81 is a Mg(2+) binding site. Cys122 provides a ligand contact to [2Fe-2S] cluster. 2 residues coordinate Mg(2+): Asp123 and Lys124. Residue Lys124 is modified to N6-carboxylysine. Cys195 contributes to the [2Fe-2S] cluster binding site. Glu494 lines the Mg(2+) pocket. The active-site Proton acceptor is Ser520.

This sequence belongs to the IlvD/Edd family. In terms of assembly, homodimer. Requires [2Fe-2S] cluster as cofactor. Mg(2+) is required as a cofactor.

The catalysed reaction is (2R)-2,3-dihydroxy-3-methylbutanoate = 3-methyl-2-oxobutanoate + H2O. It carries out the reaction (2R,3R)-2,3-dihydroxy-3-methylpentanoate = (S)-3-methyl-2-oxopentanoate + H2O. Its pathway is amino-acid biosynthesis; L-isoleucine biosynthesis; L-isoleucine from 2-oxobutanoate: step 3/4. It functions in the pathway amino-acid biosynthesis; L-valine biosynthesis; L-valine from pyruvate: step 3/4. Its function is as follows. Functions in the biosynthesis of branched-chain amino acids. Catalyzes the dehydration of (2R,3R)-2,3-dihydroxy-3-methylpentanoate (2,3-dihydroxy-3-methylvalerate) into 2-oxo-3-methylpentanoate (2-oxo-3-methylvalerate) and of (2R)-2,3-dihydroxy-3-methylbutanoate (2,3-dihydroxyisovalerate) into 2-oxo-3-methylbutanoate (2-oxoisovalerate), the penultimate precursor to L-isoleucine and L-valine, respectively. The protein is Dihydroxy-acid dehydratase of Shewanella denitrificans (strain OS217 / ATCC BAA-1090 / DSM 15013).